The chain runs to 347 residues: Magnesium-protoporphyrin IX monomethyl ester [oxidative] cyclase (347 aa).

It belongs to the AcsF family. It depends on Fe cation as a cofactor.

It carries out the reaction Mg-protoporphyrin IX 13-monomethyl ester + 3 NADPH + 3 O2 + 2 H(+) = 3,8-divinyl protochlorophyllide a + 3 NADP(+) + 5 H2O. The protein operates within porphyrin-containing compound metabolism; chlorophyll biosynthesis (light-independent). Its function is as follows. Catalyzes the formation of the isocyclic ring in chlorophyll biosynthesis. Mediates the cyclase reaction, which results in the formation of divinylprotochlorophyllide (Pchlide) characteristic of all chlorophylls from magnesium-protoporphyrin IX 13-monomethyl ester (MgPMME). This chain is Magnesium-protoporphyrin IX monomethyl ester [oxidative] cyclase, found in Prochlorococcus marinus (strain SARG / CCMP1375 / SS120).